Reading from the N-terminus, the 435-residue chain is Matrix extracellular phosphoglycoprotein (435 aa).

A signal peptide spans 1 to 16 (MQAVSVGLFLFSMTWA). Residue asparagine 71 is glycosylated (N-linked (GlcNAc...) asparagine). Disordered regions lie at residues 124 to 145 (LLQN…THYL) and 166 to 435 (LLVR…SSGD). Positions 164–186 (PDLLVRGDNDVPPFSGDGQHFMH) are dentonin. A Cell attachment site motif is present at residues 169 to 171 (RGD). O-linked (Xyl...) (chondroitin sulfate) serine glycosylation occurs at serine 178. Composition is skewed to basic and acidic residues over residues 267-278 (KFRELPGKEGNR) and 300-313 (SKEK…EHTG). Residues 337–346 (GNQVTLTESQ) show a composition bias toward polar residues. Basic residues-rich tracts occupy residues 382–391 (AHRRTSHPTR) and 405–415 (RRPHPHRRVST). Positions 418–435 (RDSSESSSSGSSSESSGD) are ASARM motif; interaction with PHEX. Residues 422-435 (ESSSSGSSSESSGD) show a composition bias toward low complexity.

The protein belongs to the PF07175/osteoregulin family. Interacts (via ASARM motif) with PHEX; the interaction is zinc-dependent. Phosphorylated on serine residues in the ASARM motif; the phosphorylation is important for the inhibition of bone mineralization. Post-translationally, cleaved by CTSB/cathepsin B; the cleavage is blocked by metalloprotease PHEX. As to expression, expressed in osteoblasts and osteocytes.

The protein resides in the secreted. It is found in the extracellular space. It localises to the extracellular matrix. In terms of biological role, regulates renal phosphate excretion. Regulates bone mineralization by osteoblasts and cartilage mineralization by chondrocytes. Regulates the mineralization of the extracellular matrix of the craniofacial complex, such as teeth, bone and cartilage. Increases dental pulp stem cell proliferation. This is Matrix extracellular phosphoglycoprotein from Rattus norvegicus (Rat).